Consider the following 142-residue polypeptide: Large ribosomal subunit protein uL13 (142 aa).

This sequence belongs to the universal ribosomal protein uL13 family. Part of the 50S ribosomal subunit.

This protein is one of the early assembly proteins of the 50S ribosomal subunit, although it is not seen to bind rRNA by itself. It is important during the early stages of 50S assembly. The polypeptide is Large ribosomal subunit protein uL13 (Shewanella denitrificans (strain OS217 / ATCC BAA-1090 / DSM 15013)).